Here is a 529-residue protein sequence, read N- to C-terminus: Glucose-6-phosphate isomerase (529 aa).

Residue glutamate 322 is the Proton donor of the active site. Residues histidine 351 and lysine 455 contribute to the active site.

This sequence belongs to the GPI family.

The protein resides in the cytoplasm. The enzyme catalyses alpha-D-glucose 6-phosphate = beta-D-fructose 6-phosphate. Its pathway is carbohydrate biosynthesis; gluconeogenesis. It participates in carbohydrate degradation; glycolysis; D-glyceraldehyde 3-phosphate and glycerone phosphate from D-glucose: step 2/4. Catalyzes the reversible isomerization of glucose-6-phosphate to fructose-6-phosphate. The protein is Glucose-6-phosphate isomerase of Cyanothece sp. (strain PCC 7425 / ATCC 29141).